Reading from the N-terminus, the 462-residue chain is PTS system mannitol-specific cryptic EIICB component (462 aa).

Residues 1–24 lie on the Cytoplasmic side of the membrane; sequence MENKSARAKVQAFGGFLTAMVIPN. Residues 13-344 enclose the PTS EIIC type-2 domain; that stretch reads FGGFLTAMVI…LKMEKTVETE (332 aa). The helical transmembrane segment at 25–46 threads the bilayer; the sequence is IGAFIAWGFITALFIPTGWLPN. Topologically, residues 47 to 50 are periplasmic; the sequence is EHFA. Residues 51–71 form a helical membrane-spanning segment; sequence KIVGPMITYLLPVMIGSTGGH. Residues 72–134 are Cytoplasmic-facing; sequence LVGGKRGAVM…AGFEMVINNF (63 aa). The helical transmembrane segment at 135–156 threads the bilayer; the sequence is SLGIAGMLLCLLGFEVIGPAVL. Residues 157 to 165 lie on the Periplasmic side of the membrane; that stretch reads IANTFVKEC. Residues 166 to 186 traverse the membrane as a helical segment; it reads IEALVHAGYLPLLSVINEPAK. The Cytoplasmic segment spans residues 187–273; sequence VLFLNNAIDQ…VLMKPLTIIA (87 aa). Residues 274–293 form a helical membrane-spanning segment; it reads MIAGGMSGTWMFNLLDGGLV. Residues 294–313 are Periplasmic-facing; it reads AGPSPGSIFAYLALTPKGSF. Residues 314–335 traverse the membrane as a helical segment; that stretch reads LATIAGVTVGTLVSFAITSLIL. Residues 336–462 are Cytoplasmic-facing; that stretch reads KMEKTVETES…FNQLTAEHKH (127 aa). Residues 371–461 enclose the PTS EIIB type-2 domain; it reads KRIAFVCDAG…LFNQLTAEHK (91 aa). The Phosphocysteine intermediate; for EIIB activity role is filled by cysteine 377. Cysteine 377 carries the post-translational modification Phosphocysteine; by EIIA.

The protein resides in the cell inner membrane. It catalyses the reaction D-mannitol(out) + N(pros)-phospho-L-histidyl-[protein] = D-mannitol 1-phosphate(in) + L-histidyl-[protein]. Functionally, the phosphoenolpyruvate-dependent sugar phosphotransferase system (sugar PTS), a major carbohydrate active transport system, catalyzes the phosphorylation of incoming sugar substrates concomitantly with their translocation across the cell membrane. The enzyme II CmtAB PTS system is involved in D-mannitol transport. This chain is PTS system mannitol-specific cryptic EIICB component (cmtA), found in Escherichia coli O157:H7.